A 121-amino-acid polypeptide reads, in one-letter code: Alpha-endosulfine (121 aa).

Positions 1-53 are disordered; the sequence is MSQKQEEENPAEETGEEKQDTQEKEGILPERAEEAKLKAKYPSLGQKPGGSDF. Residue Ser2 is modified to N-acetylserine. Position 2 is a phosphoserine (Ser2). Residues 16–37 show a composition bias toward basic and acidic residues; it reads EEKQDTQEKEGILPERAEEAKL. Thr21 carries the post-translational modification Phosphothreonine. Residue Ser43 is modified to Phosphoserine. Ser67 carries the phosphoserine; by GWL modification. Positions 79–121 are disordered; that stretch reads NKQLPSAGPDKNLVTGDHIPTPQDLPQRKSSLVTSKLAGGQVE. Ser109 carries the post-translational modification Phosphoserine; by PKA.

The protein belongs to the endosulfine family. In terms of assembly, interacts (when phosphorylated at Ser-67) with PPP2R2D. Interacts with ABCC8. Interacts with SNCA; interaction is disrupted when phosphorylated at Ser-109. In terms of processing, phosphorylation at Ser-67 by GWL during mitosis is essential for interaction with PPP2R2D (PR55-delta) and subsequent inactivation of PP2A. Phosphorylated by PKA. In terms of tissue distribution, widely expressed with high levels in skeletal muscle and brain and lower levels in the pancreas.

It is found in the cytoplasm. Functionally, protein phosphatase inhibitor that specifically inhibits protein phosphatase 2A (PP2A) during mitosis. When phosphorylated at Ser-67 during mitosis, specifically interacts with PPP2R2D (PR55-delta) and inhibits its activity, leading to inactivation of PP2A, an essential condition to keep cyclin-B1-CDK1 activity high during M phase. Also acts as a stimulator of insulin secretion by interacting with sulfonylurea receptor (ABCC8), thereby preventing sulfonylurea from binding to its receptor and reducing K(ATP) channel currents. The polypeptide is Alpha-endosulfine (ENSA) (Homo sapiens (Human)).